Here is a 335-residue protein sequence, read N- to C-terminus: Dihydroorotate dehydrogenase (quinone) (335 aa).

FMN-binding positions include 58-62 (AGADK) and Thr-82. Lys-62 is a binding site for substrate. 107–111 (NRNGF) contributes to the substrate binding site. 2 residues coordinate FMN: Asn-135 and Asn-168. Position 168 (Asn-168) interacts with substrate. The active-site Nucleophile is Ser-171. Residue Asn-173 coordinates substrate. 2 residues coordinate FMN: Lys-213 and Gly-241. 242–243 (NT) is a substrate binding site. Residues Gly-264, Gly-293, and 314-315 (YS) each bind FMN.

The protein belongs to the dihydroorotate dehydrogenase family. Type 2 subfamily. In terms of assembly, monomer. The cofactor is FMN.

Its subcellular location is the cell membrane. The catalysed reaction is (S)-dihydroorotate + a quinone = orotate + a quinol. The protein operates within pyrimidine metabolism; UMP biosynthesis via de novo pathway; orotate from (S)-dihydroorotate (quinone route): step 1/1. Its function is as follows. Catalyzes the conversion of dihydroorotate to orotate with quinone as electron acceptor. In Actinobacillus pleuropneumoniae serotype 5b (strain L20), this protein is Dihydroorotate dehydrogenase (quinone).